The sequence spans 275 residues: 4-hydroxy-3-methylbut-2-enyl diphosphate reductase (275 aa).

Cysteine 12 is a [4Fe-4S] cluster binding site. The (2E)-4-hydroxy-3-methylbut-2-enyl diphosphate site is built by histidine 36 and histidine 70. Residues histidine 36 and histidine 70 each contribute to the dimethylallyl diphosphate site. Isopentenyl diphosphate-binding residues include histidine 36 and histidine 70. Cysteine 92 contributes to the [4Fe-4S] cluster binding site. A (2E)-4-hydroxy-3-methylbut-2-enyl diphosphate-binding site is contributed by histidine 120. Histidine 120 is a binding site for dimethylallyl diphosphate. Histidine 120 contributes to the isopentenyl diphosphate binding site. Residue glutamate 122 is the Proton donor of the active site. Position 158 (threonine 158) interacts with (2E)-4-hydroxy-3-methylbut-2-enyl diphosphate. Cysteine 186 serves as a coordination point for [4Fe-4S] cluster. 4 residues coordinate (2E)-4-hydroxy-3-methylbut-2-enyl diphosphate: serine 214, serine 215, asparagine 216, and serine 258. 4 residues coordinate dimethylallyl diphosphate: serine 214, serine 215, asparagine 216, and serine 258. Isopentenyl diphosphate contacts are provided by serine 214, serine 215, asparagine 216, and serine 258.

It belongs to the IspH family. [4Fe-4S] cluster is required as a cofactor.

The catalysed reaction is isopentenyl diphosphate + 2 oxidized [2Fe-2S]-[ferredoxin] + H2O = (2E)-4-hydroxy-3-methylbut-2-enyl diphosphate + 2 reduced [2Fe-2S]-[ferredoxin] + 2 H(+). It catalyses the reaction dimethylallyl diphosphate + 2 oxidized [2Fe-2S]-[ferredoxin] + H2O = (2E)-4-hydroxy-3-methylbut-2-enyl diphosphate + 2 reduced [2Fe-2S]-[ferredoxin] + 2 H(+). It participates in isoprenoid biosynthesis; dimethylallyl diphosphate biosynthesis; dimethylallyl diphosphate from (2E)-4-hydroxy-3-methylbutenyl diphosphate: step 1/1. Its pathway is isoprenoid biosynthesis; isopentenyl diphosphate biosynthesis via DXP pathway; isopentenyl diphosphate from 1-deoxy-D-xylulose 5-phosphate: step 6/6. Its function is as follows. Catalyzes the conversion of 1-hydroxy-2-methyl-2-(E)-butenyl 4-diphosphate (HMBPP) into a mixture of isopentenyl diphosphate (IPP) and dimethylallyl diphosphate (DMAPP). Acts in the terminal step of the DOXP/MEP pathway for isoprenoid precursor biosynthesis. This Sulfurimonas denitrificans (strain ATCC 33889 / DSM 1251) (Thiomicrospira denitrificans (strain ATCC 33889 / DSM 1251)) protein is 4-hydroxy-3-methylbut-2-enyl diphosphate reductase.